Reading from the N-terminus, the 296-residue chain is Cytidine deaminase (296 aa).

CMP/dCMP-type deaminase domains lie at 48–168 (DVDA…FGPV) and 187–296 (QNVN…FIEE). A substrate-binding site is contributed by 89–91 (NME). His-102 provides a ligand contact to Zn(2+). Glu-104 serves as the catalytic Proton donor. Residues Cys-129 and Cys-132 each coordinate Zn(2+).

This sequence belongs to the cytidine and deoxycytidylate deaminase family. As to quaternary structure, homodimer. It depends on Zn(2+) as a cofactor.

It catalyses the reaction cytidine + H2O + H(+) = uridine + NH4(+). It carries out the reaction 2'-deoxycytidine + H2O + H(+) = 2'-deoxyuridine + NH4(+). Its function is as follows. This enzyme scavenges exogenous and endogenous cytidine and 2'-deoxycytidine for UMP synthesis. The chain is Cytidine deaminase from Pectobacterium atrosepticum (strain SCRI 1043 / ATCC BAA-672) (Erwinia carotovora subsp. atroseptica).